Reading from the N-terminus, the 261-residue chain is U1 small nuclear ribonucleoprotein 70 kDa homolog (261 aa).

An RRM domain is found at 100–178; it reads KTMFLSRLSY…RRIVVDVERG (79 aa). Positions 192 to 261 are disordered; the sequence is GLGGRHYTKE…DSSPKRRRYN (70 aa). The segment covering 198-215 has biased composition (basic and acidic residues); sequence YTKERPRRERGSRFRGDS. The span at 216 to 235 shows a compositional bias: gly residues; it reads GFRGGYRGGFRKSSGGGSRF.

Component of the spliceosome, where it is associated with snRNP U1. Associates with U1 snRNA.

The protein resides in the nucleus. In terms of biological role, involved in nuclear mRNA splicing. Essential for growth. This is U1 small nuclear ribonucleoprotein 70 kDa homolog from Schizosaccharomyces pombe (strain 972 / ATCC 24843) (Fission yeast).